Consider the following 279-residue polypeptide: Large ribosomal subunit protein uL2 (279 aa).

The tract at residues 223 to 279 (VVMNPVDHPHGGGEGRTSGGRHPVTPWGKPTKGKRTRSNKKTDSLIMRSRHLAKKKR) is disordered. The span at 270–279 (RSRHLAKKKR) shows a compositional bias: basic residues.

It belongs to the universal ribosomal protein uL2 family. In terms of assembly, part of the 50S ribosomal subunit. Forms a bridge to the 30S subunit in the 70S ribosome.

Functionally, one of the primary rRNA binding proteins. Required for association of the 30S and 50S subunits to form the 70S ribosome, for tRNA binding and peptide bond formation. It has been suggested to have peptidyltransferase activity; this is somewhat controversial. Makes several contacts with the 16S rRNA in the 70S ribosome. The protein is Large ribosomal subunit protein uL2 of Rhodospirillum rubrum (strain ATCC 11170 / ATH 1.1.1 / DSM 467 / LMG 4362 / NCIMB 8255 / S1).